A 557-amino-acid chain; its full sequence is Formate--tetrahydrofolate ligase 2 (557 aa).

Residue 66–73 (TPAGEGKT) participates in ATP binding.

Belongs to the formate--tetrahydrofolate ligase family.

The catalysed reaction is (6S)-5,6,7,8-tetrahydrofolate + formate + ATP = (6R)-10-formyltetrahydrofolate + ADP + phosphate. It participates in one-carbon metabolism; tetrahydrofolate interconversion. This is Formate--tetrahydrofolate ligase 2 from Streptococcus pyogenes serotype M1.